The primary structure comprises 26 residues: Turripeptide OL57 (26 aa).

Post-translationally, contains 2 disulfide bonds. In terms of tissue distribution, expressed by the venom duct.

It is found in the secreted. In terms of biological role, acts as a neurotoxin by inhibiting an ion channel. The polypeptide is Turripeptide OL57 (Iotyrris olangoensis (Sea snail)).